Consider the following 244-residue polypeptide: Ethylene-responsive transcription factor 1 (244 aa).

The AP2/ERF DNA-binding region spans His-106–Pro-164. Low complexity predominate over residues Ser-186 to Gly-198. A disordered region spans residues Ser-186 to Leu-214.

Belongs to the ethylene-response factor family. Class 1 subfamily. Present in stems.

Its subcellular location is the nucleus. Involved in the regulation of gene expression during fruit ripening, by stress factors and by components of stress signal transduction pathways. Transcription factor that binds to the GCC-box pathogenesis-related promoter element. Probably acts as a transcriptional activator and may be involved in disease resistance pathways. The polypeptide is Ethylene-responsive transcription factor 1 (ERF1) (Solanum lycopersicum (Tomato)).